The following is a 304-amino-acid chain: Transcription factor BEE 2 (304 aa).

Positions 74 to 132 are disordered; it reads FHMEPVKNNGHSRAITLQNKRKPEGKTEKREKKKIKAEDETEPSMKGKSNMSNTETSSE. The span at 82 to 91 shows a compositional bias: polar residues; it reads NGHSRAITLQ. The span at 94–103 shows a compositional bias: basic and acidic residues; it reads RKPEGKTEKR. Positions 120–132 are enriched in polar residues; that stretch reads GKSNMSNTETSSE. Residues 147–197 form the bHLH domain; that stretch reads EATDRHSLAERARREKISKKMKCLQDIVPGCNKVTGKAGMLDEIINYVQSL.

Homodimer. As to expression, expressed in stems and flowers.

It is found in the nucleus. Functionally, positive regulator of brassinosteroid signaling. The chain is Transcription factor BEE 2 (BEE2) from Arabidopsis thaliana (Mouse-ear cress).